The primary structure comprises 291 residues: 2-C-methyl-D-erythritol 4-phosphate cytidylyltransferase (291 aa).

The disordered stretch occupies residues 1–23 (MTERDFDTPVETPTVQPAPAQGA).

Belongs to the IspD/TarI cytidylyltransferase family. IspD subfamily.

It carries out the reaction 2-C-methyl-D-erythritol 4-phosphate + CTP + H(+) = 4-CDP-2-C-methyl-D-erythritol + diphosphate. The protein operates within isoprenoid biosynthesis; isopentenyl diphosphate biosynthesis via DXP pathway; isopentenyl diphosphate from 1-deoxy-D-xylulose 5-phosphate: step 2/6. In terms of biological role, catalyzes the formation of 4-diphosphocytidyl-2-C-methyl-D-erythritol from CTP and 2-C-methyl-D-erythritol 4-phosphate (MEP). This chain is 2-C-methyl-D-erythritol 4-phosphate cytidylyltransferase, found in Bifidobacterium longum (strain DJO10A).